We begin with the raw amino-acid sequence, 681 residues long: uncharacterized protein (681 aa).

This sequence in the N-terminal section; belongs to the purine/pyrimidine phosphoribosyltransferase family.

This is an uncharacterized protein from Mycobacterium tuberculosis (strain CDC 1551 / Oshkosh).